The following is a 201-amino-acid chain: UPF0301 protein Atu0781 (201 aa).

It belongs to the UPF0301 (AlgH) family.

In Agrobacterium fabrum (strain C58 / ATCC 33970) (Agrobacterium tumefaciens (strain C58)), this protein is UPF0301 protein Atu0781.